Here is a 984-residue protein sequence, read N- to C-terminus: MSNPNNIESSKTNLTTSIQAALSQLENAYNPSEVEAGMYQGWEDSGYFQPTFDKDESFSIALPPPNVTGSLHMGHGFNNAIMDALTRYHRMDGDNTLWQPGTDHAGIATQMVVERRLEAEGIKRRDMSREDFIDKVWEWKEESGGNITRQIRRLGSSVDWSRERFTMDDGLSNAVKEVFVRLFDDGLIYRGKRLVNWDPKFQTALSDLEVENVDEKGSLWHFRYHFTDTDITTQDGKNYLVVATTRPETSLGDTAVAVNPKDERYAHLIGKTITLPITGRIVPIVADDYVDIEFGTGCVKITPAHDFNDYELGRRHELPLINILDAHAHILPAMEVYPDLQTREPTLETTPADYAGLERFAARKLLVEQAGEQGWLEKIEDYALKAPRAERGGAIVEPWLTDQWYVAVKELAQPAIAAVEDGQIEFVPAQYKNMYMAWMNGIQDWCISRQLWWGHRIPAWYDEEGSIYVARDEAEVRSKYNLAADVKLRQDDDVLDTWFSSGLWTFSTLDWADVNADPRVMETFHPTSVLVTGFDIIFFWVARMIMMTMHFVKNEDGTPQIPFKTVYVHGLVRDGNGQKMSKSKGNVLDPIDIIDGIELEALVEKRTSNMMNPKDAAKIEKQTRKEFPEGIPAFGTDALRFTFTSLASTGRDINFDLKRVEGYRNFCNKIWNASRFVLMNCVDKEGNAQAIDQTANADVWELPEKWIMSRLNSTITNIHQHFDQYRLDMVSHDIYEFIWNEYCDWYVELAKASLNDDSVSDERKAQIRYVLLHVLETALRFSHPIMPYLTEQIWQTIAPLLNRKETDSIVIAAYPQTDNSQISEQTEADMAWLQELIASVRNIRGEMKLGNAVRLPVLLQNISAAEDTRLSRIANQFKALAKVESLTILKEGDEVPLSSSSMVGQLRVLVPMKGLIDPTAELARLGKSYDKLKGQSEGIARKLGNEGFVSKAPVEVVDAEKAKLAELEGQLTAMTAQMEELKNL.

Residues 65–75 (PNVTGSLHMGH) carry the 'HIGH' region motif. Positions 579-583 (KMSKS) match the 'KMSKS' region motif. K582 contributes to the ATP binding site. Residues 954-984 (VEVVDAEKAKLAELEGQLTAMTAQMEELKNL) are a coiled coil.

Belongs to the class-I aminoacyl-tRNA synthetase family. ValS type 1 subfamily. Monomer.

It localises to the cytoplasm. It catalyses the reaction tRNA(Val) + L-valine + ATP = L-valyl-tRNA(Val) + AMP + diphosphate. Functionally, catalyzes the attachment of valine to tRNA(Val). As ValRS can inadvertently accommodate and process structurally similar amino acids such as threonine, to avoid such errors, it has a 'posttransfer' editing activity that hydrolyzes mischarged Thr-tRNA(Val) in a tRNA-dependent manner. The sequence is that of Valine--tRNA ligase from Psychrobacter arcticus (strain DSM 17307 / VKM B-2377 / 273-4).